The chain runs to 93 residues: Cell division protein CrgA (93 aa).

2 consecutive transmembrane segments (helical) span residues 31–51 and 70–90; these read VWFVTLFVGLMLIGLVWLMVF and LGPWNYAIAFAFMITGLLLTM.

Belongs to the CrgA family.

The protein localises to the cell membrane. Functionally, involved in cell division. The chain is Cell division protein CrgA from Mycobacterium leprae (strain Br4923).